Consider the following 158-residue polypeptide: Cytochrome b6-f complex subunit 4 (158 aa).

3 consecutive transmembrane segments (helical) span residues 34–54 (LLYISPVVILGTIACNVGLAV), 93–113 (LLGVLLMVSVPTGLLTVPFLE), and 129–149 (TVFLIGTVIALWLGIGATLPI).

The protein belongs to the cytochrome b family. PetD subfamily. In terms of assembly, the 4 large subunits of the cytochrome b6-f complex are cytochrome b6, subunit IV (17 kDa polypeptide, petD), cytochrome f and the Rieske protein, while the 4 small subunits are petG, petL, petM and petN. The complex functions as a dimer.

Its subcellular location is the plastid. It localises to the chloroplast thylakoid membrane. In terms of biological role, component of the cytochrome b6-f complex, which mediates electron transfer between photosystem II (PSII) and photosystem I (PSI), cyclic electron flow around PSI, and state transitions. This chain is Cytochrome b6-f complex subunit 4, found in Liriodendron tulipifera (Tuliptree).